The sequence spans 780 residues: Ino eighty subunit 1 (780 aa).

Disordered regions lie at residues 1–25 and 563–780; these read MADV…QQIH and ANGP…PGWN. Residues 563–584 are compositionally biased toward basic and acidic residues; sequence ANGPRRDRKKEREERQKAREEA. A compositionally biased stretch (basic residues) spans 600-613; the sequence is SRARAQRNAKRKLA. A compositionally biased stretch (low complexity) spans 614 to 635; it reads RAAAAASSTPSASTPKTAAARS. 2 stretches are compositionally biased toward acidic residues: residues 676–686 and 723–751; these read LEGEESLDDID and DADD…EGDD.

As to quaternary structure, component of the chromatin-remodeling INO80 complex.

The protein resides in the nucleus. Its function is as follows. Probably involved in transcription regulation via its interaction with the INO80 complex, a chromatin-remodeling complex. In Emericella nidulans (strain FGSC A4 / ATCC 38163 / CBS 112.46 / NRRL 194 / M139) (Aspergillus nidulans), this protein is Ino eighty subunit 1.